A 341-amino-acid polypeptide reads, in one-letter code: L-threonine 3-dehydrogenase (341 aa).

Zn(2+) is bound at residue cysteine 38. Catalysis depends on charge relay system residues threonine 40 and histidine 43. 6 residues coordinate Zn(2+): histidine 63, glutamate 64, cysteine 93, cysteine 96, cysteine 99, and cysteine 107. Residues isoleucine 175, aspartate 195, arginine 200, leucine 262–isoleucine 264, and isoleucine 286–tyrosine 287 each bind NAD(+).

It belongs to the zinc-containing alcohol dehydrogenase family. Homotetramer. Zn(2+) serves as cofactor.

The protein localises to the cytoplasm. It carries out the reaction L-threonine + NAD(+) = (2S)-2-amino-3-oxobutanoate + NADH + H(+). It functions in the pathway amino-acid degradation; L-threonine degradation via oxydo-reductase pathway; glycine from L-threonine: step 1/2. Functionally, catalyzes the NAD(+)-dependent oxidation of L-threonine to 2-amino-3-ketobutyrate. The polypeptide is L-threonine 3-dehydrogenase (Shewanella baltica (strain OS185)).